A 301-amino-acid polypeptide reads, in one-letter code: Tetrahydromethanopterin S-methyltransferase subunit E (301 aa).

The next 5 membrane-spanning stretches (helical) occupy residues 85–105 (VIFAIAIGALVASAVHGTYCI), 130–150 (HTPVMMGYAFITTFCILVVSY), 151–171 (IMVAVLAHPFPLTLLAFIWGI), 232–252 (PVTGLAFGMTVFLSGWVTAVF), and 258–278 (LTMGWLSVAAGVILVLLLIIW).

Belongs to the MtrE family. The complex is composed of 8 subunits; MtrA, MtrB, MtrC, MtrD, MtrE, MtrF, MtrG and MtrH.

Its subcellular location is the cell membrane. The enzyme catalyses 5-methyl-5,6,7,8-tetrahydromethanopterin + coenzyme M + 2 Na(+)(in) = 5,6,7,8-tetrahydromethanopterin + methyl-coenzyme M + 2 Na(+)(out). In terms of biological role, part of a complex that catalyzes the formation of methyl-coenzyme M and tetrahydromethanopterin from coenzyme M and methyl-tetrahydromethanopterin. This is an energy-conserving, sodium-ion translocating step. The protein is Tetrahydromethanopterin S-methyltransferase subunit E of Methanococcoides burtonii (strain DSM 6242 / NBRC 107633 / OCM 468 / ACE-M).